Reading from the N-terminus, the 297-residue chain is Bifunctional protein FolD (297 aa).

Residues 168-170 (GRG), threonine 195, and valine 236 contribute to the NADP(+) site.

This sequence belongs to the tetrahydrofolate dehydrogenase/cyclohydrolase family. In terms of assembly, homodimer.

It carries out the reaction (6R)-5,10-methylene-5,6,7,8-tetrahydrofolate + NADP(+) = (6R)-5,10-methenyltetrahydrofolate + NADPH. The enzyme catalyses (6R)-5,10-methenyltetrahydrofolate + H2O = (6R)-10-formyltetrahydrofolate + H(+). Its pathway is one-carbon metabolism; tetrahydrofolate interconversion. Functionally, catalyzes the oxidation of 5,10-methylenetetrahydrofolate to 5,10-methenyltetrahydrofolate and then the hydrolysis of 5,10-methenyltetrahydrofolate to 10-formyltetrahydrofolate. The polypeptide is Bifunctional protein FolD (Bifidobacterium animalis subsp. lactis (strain AD011)).